Consider the following 266-residue polypeptide: Metallo-beta-lactamase domain-containing protein 1 (266 aa).

Residues 48 to 71 (LPQTRGPASSHRESPRGSGGAEAA) are disordered. Positions 114, 116, 118, 119, 169, 192, and 231 each coordinate Zn(2+). The segment at 229 to 266 (PGHGPPFRVLREASQPETEGGGNSQQEPVVGDEEPALH) is disordered.

Belongs to the metallo-beta-lactamase superfamily. Glyoxalase II family. In terms of assembly, homodimer. The cofactor is Zn(2+).

It localises to the cytoplasm. The protein resides in the cytosol. It is found in the nucleus. It carries out the reaction a ribonucleotidyl-ribonucleotide-RNA + H2O = a 3'-end ribonucleotide-RNA + a 5'-end 5'-phospho-ribonucleoside-RNA + H(+). Functionally, endoribonuclease that catalyzes the hydrolysis of histone-coding pre-mRNA 3'-end. Involved in histone pre-mRNA processing during the S-phase of the cell cycle, which is required for entering/progressing through S-phase. Cleaves histone pre-mRNA at a major and a minor cleavage site after the 5'-ACCCA-3' and the 5'-ACCCACA-3' sequence, respectively, and located downstream of the stem-loop. May require the presence of the HDE element located at the histone pre-RNA 3'-end to avoid non-specific cleavage. The chain is Metallo-beta-lactamase domain-containing protein 1 from Homo sapiens (Human).